A 514-amino-acid polypeptide reads, in one-letter code: ATP synthase subunit alpha (514 aa).

Residue Gly170 to Thr177 coordinates ATP.

Belongs to the ATPase alpha/beta chains family. F-type ATPases have 2 components, CF(1) - the catalytic core - and CF(0) - the membrane proton channel. CF(1) has five subunits: alpha(3), beta(3), gamma(1), delta(1), epsilon(1). CF(0) has three main subunits: a(1), b(2) and c(9-12). The alpha and beta chains form an alternating ring which encloses part of the gamma chain. CF(1) is attached to CF(0) by a central stalk formed by the gamma and epsilon chains, while a peripheral stalk is formed by the delta and b chains.

It is found in the cell inner membrane. It carries out the reaction ATP + H2O + 4 H(+)(in) = ADP + phosphate + 5 H(+)(out). Its function is as follows. Produces ATP from ADP in the presence of a proton gradient across the membrane. The alpha chain is a regulatory subunit. The protein is ATP synthase subunit alpha of Psychrobacter cryohalolentis (strain ATCC BAA-1226 / DSM 17306 / VKM B-2378 / K5).